The following is a 944-amino-acid chain: ATP-dependent RNA helicase DDX42 (944 aa).

The span at 1-18 (MNWNKGGPGTKRGFGFGG) shows a compositional bias: gly residues. 3 disordered regions span residues 1–119 (MNWN…LEAF), 131–155 (MKRLEDKDKEKKNAKGIRDDIEEED), and 182–203 (EYDSDGNPIAPSKKIIDPLPPI). Low complexity predominate over residues 35 to 52 (SHSAFGTAGSSAAFAKSG). Over residues 70 to 84 (DEENAYFEDEEEDNS) the composition is skewed to acidic residues. The stretch at 120–157 (MAEVEDQAARDMKRLEDKDKEKKNAKGIRDDIEEEDDQ) forms a coiled coil. Positions 131–149 (MKRLEDKDKEKKNAKGIRD) are enriched in basic and acidic residues. The Q motif motif lies at 253–281 (SSFARFGFDEQLMHQIRKSEYTQPTPIQC). One can recognise a Helicase ATP-binding domain in the interval 284–459 (VPVAMSGRDM…RDILIDPIRV (176 aa)). 297-304 (AKTGSGKT) contacts ATP. A DEAD box motif is present at residues 407-410 (DEAD). The 146-residue stretch at 487-632 (WLTRRLVEFT…HVSKELLDLA (146 aa)) folds into the Helicase C-terminal domain. Disordered stretches follow at residues 642 to 682 (RFKG…VMSN), 723 to 753 (GSSAAGASGWTSAGSLNSVPTSSAQQNAANP), and 794 to 944 (SANA…RWDS). The span at 723–737 (GSSAAGASGWTSAGS) shows a compositional bias: low complexity. The span at 738–752 (LNSVPTSSAQQNAAN) shows a compositional bias: polar residues. Over residues 794–814 (SANASAGNREGVGSAGSAPRG) the composition is skewed to low complexity. Residues 815–824 (GSSGGGGGGI) are compositionally biased toward gly residues. 2 stretches are compositionally biased toward basic and acidic residues: residues 825–887 (VRER…RHFT) and 901–926 (NISEGRSNESRNGENRKDANSRDNKT).

It belongs to the DEAD box helicase family. DDX42 subfamily. In terms of assembly, transient component of the SF3B subcomplex of the 17S U2 SnRNP complex.

Its subcellular location is the cytoplasm. The protein localises to the nucleus. It carries out the reaction ATP + H2O = ADP + phosphate + H(+). Functionally, ATP-dependent RNA helicase that binds to partially double-stranded RNAs (dsRNAs) in order to unwind RNA secondary structures. Unwinding is promoted in the presence of single-strand binding proteins. Also mediates RNA duplex formation thereby displacing the single-strand RNA binding protein. ATP and ADP modulate its activity: ATP binding and hydrolysis by DDX42 triggers RNA strand separation, whereas the ADP-bound form of the protein triggers annealing of complementary RNA strands. Required for assembly of the 17S U2 SnRNP complex of the spliceosome, a large ribonucleoprotein complex that removes introns from transcribed pre-mRNAs: DDX42 associates transiently with the SF3B subcomplex of the 17S U2 SnRNP complex and is released after fulfilling its role in the assembly of 17S U2 SnRNP. The protein is ATP-dependent RNA helicase DDX42 (DDX42) of Gallus gallus (Chicken).